A 464-amino-acid polypeptide reads, in one-letter code: Protein transport protein HofB homolog (464 aa).

An ATP-binding site is contributed by 264 to 271; the sequence is GPTGSGKS.

This sequence belongs to the GSP E family.

The protein is Protein transport protein HofB homolog (hofB) of Haemophilus influenzae (strain ATCC 51907 / DSM 11121 / KW20 / Rd).